A 61-amino-acid chain; its full sequence is Protein stunted (61 aa).

The segment at 3–15 is sufficient for mth activation; that stretch reads AWRAAGITYIQYS.

This sequence belongs to the eukaryotic ATPase epsilon family.

Functionally, activates the G-protein coupled receptor mth in vitro, leading to increased intracellular calcium ion levels. This is Protein stunted from Drosophila melanogaster (Fruit fly).